A 483-amino-acid chain; its full sequence is Dihydrolipoyllysine-residue acetyltransferase component of pyruvate dehydrogenase complex, mitochondrial (483 aa).

The transit peptide at 1-28 (MLSANMLRRMHHGVAVTRMLLVSNGKVQ) directs the protein to the mitochondrion. The 77-residue stretch at 53–129 (HTVINMPALS…PVGKPLAVTV (77 aa)) folds into the Lipoyl-binding domain. At lysine 94 the chain carries N6-lipoyllysine. Disordered stretches follow at residues 143-187 (IEDS…DRVF) and 234-254 (EAAA…APGD). Positions 146-160 (SSAKEPSAKSGEEKS) are enriched in basic and acidic residues. The segment covering 161–178 (APSSEKQSKETSSPSNVS) has biased composition (polar residues). Residues 187-224 (FASPLARKLAEEKDLDLSQIRGSGPNGRIIKVDIENFK) form the Peripheral subunit-binding (PSBD) domain. Positions 235–252 (AAAKATTPAASAADAAAP) are enriched in low complexity. Residues histidine 456 and aspartate 460 contribute to the active site.

The protein belongs to the 2-oxoacid dehydrogenase family. The cofactor is (R)-lipoate.

It is found in the mitochondrion matrix. It carries out the reaction N(6)-[(R)-dihydrolipoyl]-L-lysyl-[protein] + acetyl-CoA = N(6)-[(R)-S(8)-acetyldihydrolipoyl]-L-lysyl-[protein] + CoA. Functionally, the pyruvate dehydrogenase complex catalyzes the overall conversion of pyruvate to acetyl-CoA and CO(2). It contains multiple copies of three enzymatic components: pyruvate dehydrogenase (E1), dihydrolipoamide acetyltransferase (E2) and lipoamide dehydrogenase (E3). The polypeptide is Dihydrolipoyllysine-residue acetyltransferase component of pyruvate dehydrogenase complex, mitochondrial (Schizosaccharomyces pombe (strain 972 / ATCC 24843) (Fission yeast)).